The chain runs to 269 residues: Bis(5'-nucleosyl)-tetraphosphatase, symmetrical (269 aa).

The protein belongs to the Ap4A hydrolase family.

The catalysed reaction is P(1),P(4)-bis(5'-adenosyl) tetraphosphate + H2O = 2 ADP + 2 H(+). Its function is as follows. Hydrolyzes diadenosine 5',5'''-P1,P4-tetraphosphate to yield ADP. This Vibrio cholerae serotype O1 (strain ATCC 39541 / Classical Ogawa 395 / O395) protein is Bis(5'-nucleosyl)-tetraphosphatase, symmetrical.